We begin with the raw amino-acid sequence, 598 residues long: Rho-related protein racA (598 aa).

11–17 (DGAVGKS) is a GTP binding site. Positions 32 to 40 (YVPTVFDNY) match the Effector region motif. Residues 57-61 (DTAGQ) and 115-118 (TKND) contribute to the GTP site. Positions 175–210 (ASAKKKGGFFSSSSSSSSSSSSKSSEKSVPIPPVMP) are disordered. Low complexity predominate over residues 182-197 (GFFSSSSSSSSSSSSK). BTB domains follow at residues 239-344 (SDVK…NYLD) and 405-472 (SDIQ…PIEE).

This sequence in the N-terminal section; belongs to the small GTPase superfamily. Rho family. In terms of assembly, interacts with pakB.

The chain is Rho-related protein racA (racA) from Dictyostelium discoideum (Social amoeba).